The chain runs to 671 residues: ATP-dependent zinc metalloprotease FtsH (671 aa).

Residues 1–22 (MANPNNNNDNKQNNNNNFFNDN) lie on the Cytoplasmic side of the membrane. A helical membrane pass occupies residues 23-43 (PLLAFAIFSIVIILIFKSFVG). Residues 44 to 130 (EGESLGTMMN…ISYEGVVGNG (87 aa)) lie on the Periplasmic side of the membrane. The chain crosses the membrane as a helical span at residues 131 to 151 (FFSELISMMLPILIFFAIWIF). The Cytoplasmic portion of the chain corresponds to 152 to 671 (LAKKMSKGMG…SEESDNNKEA (520 aa)). ATP is bound at residue 224-231 (GPPGTGKT). Histidine 447 lines the Zn(2+) pocket. Residue glutamate 448 is part of the active site. Zn(2+) contacts are provided by histidine 451 and aspartate 525. Residues 630 to 671 (EKGMPSRLAHKDKVAKNKAEADKKEEALKKEISEESDNNKEA) are disordered.

The protein in the central section; belongs to the AAA ATPase family. In the C-terminal section; belongs to the peptidase M41 family. As to quaternary structure, homohexamer. The cofactor is Zn(2+).

Its subcellular location is the cell inner membrane. Functionally, acts as a processive, ATP-dependent zinc metallopeptidase for both cytoplasmic and membrane proteins. Plays a role in the quality control of integral membrane proteins. The sequence is that of ATP-dependent zinc metalloprotease FtsH from Sulfurovum sp. (strain NBC37-1).